Consider the following 316-residue polypeptide: Vacuolar morphogenesis protein 7 (316 aa).

The PX domain maps to 1 to 124 (MAANSVGKMS…QDFLQLSKPN (124 aa)). Positions 168–186 (RARTKLHKLRERLEQDVQK) form a coiled coil. Positions 250–312 (MQMVRDQEQE…QIANKKARHF (63 aa)) constitute a t-SNARE coiled-coil homology domain.

In terms of assembly, possibly multimeric. Associates with VAM3.

It is found in the vacuole. Essential for proper morphogenesis of the vacuole. May exist as structural reinforcement on the surface of the vacuolar membrane and be required for maintenance against rupture by osmotic pressure. The sequence is that of Vacuolar morphogenesis protein 7 (VAM7) from Saccharomyces cerevisiae (strain ATCC 204508 / S288c) (Baker's yeast).